Reading from the N-terminus, the 142-residue chain is Large ribosomal subunit protein uL13 (142 aa).

It belongs to the universal ribosomal protein uL13 family. In terms of assembly, part of the 50S ribosomal subunit.

Functionally, this protein is one of the early assembly proteins of the 50S ribosomal subunit, although it is not seen to bind rRNA by itself. It is important during the early stages of 50S assembly. This chain is Large ribosomal subunit protein uL13, found in Alcanivorax borkumensis (strain ATCC 700651 / DSM 11573 / NCIMB 13689 / SK2).